The chain runs to 745 residues: 5-methyltetrahydropteroyltriglutamate--homocysteine methyltransferase (745 aa).

Residues 19–22 (RELK) and lysine 119 each bind 5-methyltetrahydropteroyltri-L-glutamate. L-homocysteine contacts are provided by residues 418–420 (IGS) and glutamate 471. Residues 418 to 420 (IGS) and glutamate 471 each bind L-methionine. Residues 502 to 503 (RC) and tryptophan 548 each bind 5-methyltetrahydropteroyltri-L-glutamate. Residue aspartate 586 coordinates L-homocysteine. An L-methionine-binding site is contributed by aspartate 586. Glutamate 592 is a binding site for 5-methyltetrahydropteroyltri-L-glutamate. Residues histidine 628, cysteine 630, and glutamate 652 each coordinate Zn(2+). The active-site Proton donor is the histidine 681. Cysteine 713 is a Zn(2+) binding site.

It belongs to the vitamin-B12 independent methionine synthase family. The cofactor is Zn(2+).

The catalysed reaction is 5-methyltetrahydropteroyltri-L-glutamate + L-homocysteine = tetrahydropteroyltri-L-glutamate + L-methionine. It participates in amino-acid biosynthesis; L-methionine biosynthesis via de novo pathway; L-methionine from L-homocysteine (MetE route): step 1/1. Catalyzes the transfer of a methyl group from 5-methyltetrahydrofolate to homocysteine resulting in methionine formation. In Corynebacterium glutamicum (strain ATCC 13032 / DSM 20300 / JCM 1318 / BCRC 11384 / CCUG 27702 / LMG 3730 / NBRC 12168 / NCIMB 10025 / NRRL B-2784 / 534), this protein is 5-methyltetrahydropteroyltriglutamate--homocysteine methyltransferase.